The chain runs to 486 residues: Fructose dehydrogenase cytochrome subunit (486 aa).

An N-terminal signal peptide occupies residues 1–25 (MRYFRPLSATAMTTVLLLAGTNVRA). 3 consecutive Cytochrome c domains span residues 38-142 (PSIS…MTEV), 186-294 (DDWN…RSVP), and 330-423 (TKTT…LSHF). Positions 52, 55, 56, 201, 204, 205, 343, 346, and 347 each coordinate heme c. A helical transmembrane segment spans residues 458 to 478 (LLGTGGILGAILVVAGLWWLI).

Heterotrimer composed of FdhL, FdhS and FdhC. In terms of processing, binds 3 heme c groups covalently per subunit.

It localises to the cell membrane. Functionally, cytochrome subunit of fructose dehydrogenase, an enzyme that catalyzes the oxidation of D-fructose to produce 5-keto-D-fructose. In the complex, mediates both the electron transfer to ubiquinone and the anchoring of the complex to the membrane. This Gluconobacter japonicus protein is Fructose dehydrogenase cytochrome subunit (fdhC).